The primary structure comprises 74 residues: MDSEVQRDGRILDLIDDAWREDKLPYEDVAIPLSELPEPEQDNGGTTESVKEQEMKWTDLALQGLHENVPPAGN.

Residues Leu-33 to Lys-56 are disordered.

The protein belongs to the APC13 family. In terms of assembly, the mammalian APC/C is composed at least of 14 distinct subunits ANAPC1, ANAPC2, CDC27/APC3, ANAPC4, ANAPC5, CDC16/APC6, ANAPC7, CDC23/APC8, ANAPC10, ANAPC11, CDC26/APC12, ANAPC13, ANAPC15 and ANAPC16 that assemble into a complex of at least 19 chains with a combined molecular mass of around 1.2 MDa; APC/C interacts with FZR1 and FBXO5.

The protein localises to the nucleus. It functions in the pathway protein modification; protein ubiquitination. In terms of biological role, component of the anaphase promoting complex/cyclosome (APC/C), a cell cycle-regulated E3 ubiquitin ligase that controls progression through mitosis and the G1 phase of the cell cycle. The APC/C complex acts by mediating ubiquitination and subsequent degradation of target proteins: it mainly mediates the formation of 'Lys-11'-linked polyubiquitin chains and, to a lower extent, the formation of 'Lys-48'- and 'Lys-63'-linked polyubiquitin chains. The APC/C complex catalyzes assembly of branched 'Lys-11'-/'Lys-48'-linked branched ubiquitin chains on target proteins. The protein is Anaphase-promoting complex subunit 13 (Anapc13) of Mus musculus (Mouse).